Here is a 402-residue protein sequence, read N- to C-terminus: Sulfate adenylyltransferase (402 aa).

This sequence belongs to the sulfate adenylyltransferase family.

It catalyses the reaction sulfate + ATP + H(+) = adenosine 5'-phosphosulfate + diphosphate. It functions in the pathway sulfur metabolism; hydrogen sulfide biosynthesis; sulfite from sulfate: step 1/3. The sequence is that of Sulfate adenylyltransferase from Ruthia magnifica subsp. Calyptogena magnifica.